A 95-amino-acid chain; its full sequence is Co-chaperonin GroES (95 aa).

Belongs to the GroES chaperonin family. Heptamer of 7 subunits arranged in a ring. Interacts with the chaperonin GroEL.

The protein resides in the cytoplasm. Functionally, together with the chaperonin GroEL, plays an essential role in assisting protein folding. The GroEL-GroES system forms a nano-cage that allows encapsulation of the non-native substrate proteins and provides a physical environment optimized to promote and accelerate protein folding. GroES binds to the apical surface of the GroEL ring, thereby capping the opening of the GroEL channel. The protein is Co-chaperonin GroES of Deinococcus radiodurans (strain ATCC 13939 / DSM 20539 / JCM 16871 / CCUG 27074 / LMG 4051 / NBRC 15346 / NCIMB 9279 / VKM B-1422 / R1).